A 202-amino-acid polypeptide reads, in one-letter code: Large ribosomal subunit protein uL4 (202 aa).

Residues 42–52 (GTKAQKSRSQV) show a composition bias toward polar residues. The interval 42–70 (GTKAQKSRSQVSGTTKKSKKQKGGGARHG) is disordered.

The protein belongs to the universal ribosomal protein uL4 family. In terms of assembly, part of the 50S ribosomal subunit.

Its function is as follows. One of the primary rRNA binding proteins, this protein initially binds near the 5'-end of the 23S rRNA. It is important during the early stages of 50S assembly. It makes multiple contacts with different domains of the 23S rRNA in the assembled 50S subunit and ribosome. Forms part of the polypeptide exit tunnel. This is Large ribosomal subunit protein uL4 from Xylella fastidiosa (strain Temecula1 / ATCC 700964).